The following is a 257-amino-acid chain: NAD kinase (257 aa).

The active-site Proton acceptor is the Asp-46. NAD(+) contacts are provided by residues 46–47 (DG), 116–117 (NE), Asp-146, Ala-154, 157–162 (TAYNLS), and Asn-218.

The protein belongs to the NAD kinase family. Requires a divalent metal cation as cofactor.

Its subcellular location is the cytoplasm. It catalyses the reaction NAD(+) + ATP = ADP + NADP(+) + H(+). Involved in the regulation of the intracellular balance of NAD and NADP, and is a key enzyme in the biosynthesis of NADP. Catalyzes specifically the phosphorylation on 2'-hydroxyl of the adenosine moiety of NAD to yield NADP. The polypeptide is NAD kinase (Brucella melitensis biotype 1 (strain ATCC 23456 / CCUG 17765 / NCTC 10094 / 16M)).